The following is a 232-amino-acid chain: 2,3,4,5-tetrahydropyridine-2,6-dicarboxylate N-acetyltransferase (232 aa).

The protein belongs to the transferase hexapeptide repeat family. DapH subfamily.

The catalysed reaction is (S)-2,3,4,5-tetrahydrodipicolinate + acetyl-CoA + H2O = L-2-acetamido-6-oxoheptanedioate + CoA. The protein operates within amino-acid biosynthesis; L-lysine biosynthesis via DAP pathway; LL-2,6-diaminopimelate from (S)-tetrahydrodipicolinate (acetylase route): step 1/3. Functionally, catalyzes the transfer of an acetyl group from acetyl-CoA to tetrahydrodipicolinate. The protein is 2,3,4,5-tetrahydropyridine-2,6-dicarboxylate N-acetyltransferase of Streptococcus pneumoniae serotype 2 (strain D39 / NCTC 7466).